The chain runs to 353 residues: Outer membrane protein P2 (353 aa).

Residues 1–20 form the signal peptide; it reads MKKTLAALIVGAFAASAANA.

Belongs to the Gram-negative porin family. Homotrimer.

The protein localises to the cell outer membrane. Its function is as follows. Forms pores that allow passive diffusion of small molecules across the outer membrane. The sequence is that of Outer membrane protein P2 (ompP2) from Haemophilus influenzae.